The following is a 253-amino-acid chain: Methionine aminopeptidase (253 aa).

His78 contacts substrate. Asp95, Asp106, and His169 together coordinate a divalent metal cation. Substrate is bound at residue His176. A divalent metal cation contacts are provided by Glu206 and Glu237.

The protein belongs to the peptidase M24A family. Methionine aminopeptidase type 1 subfamily. In terms of assembly, monomer. The cofactor is Co(2+). Zn(2+) serves as cofactor. Requires Mn(2+) as cofactor. Fe(2+) is required as a cofactor.

The catalysed reaction is Release of N-terminal amino acids, preferentially methionine, from peptides and arylamides.. In terms of biological role, removes the N-terminal methionine from nascent proteins. The N-terminal methionine is often cleaved when the second residue in the primary sequence is small and uncharged (Met-Ala-, Cys, Gly, Pro, Ser, Thr, or Val). Requires deformylation of the N(alpha)-formylated initiator methionine before it can be hydrolyzed. The protein is Methionine aminopeptidase of Helicobacter pylori (strain J99 / ATCC 700824) (Campylobacter pylori J99).